The chain runs to 253 residues: Thiamine import ATP-binding protein ThiQ (253 aa).

In terms of domain architecture, ABC transporter spans 8–236 (VRLDKVSFSY…AGPEAFRRYI (229 aa)). Position 38–45 (38–45 (GPSGSGKS)) interacts with ATP.

Belongs to the ABC transporter superfamily. Thiamine importer (TC 3.A.1.19.1) family. The complex is composed of two ATP-binding proteins (ThiQ), two transmembrane proteins (ThiP) and a solute-binding protein (ThiB).

It is found in the cell inner membrane. The catalysed reaction is thiamine(out) + ATP + H2O = thiamine(in) + ADP + phosphate + H(+). Part of the ABC transporter complex ThiBPQ involved in thiamine import. Responsible for energy coupling to the transport system. This chain is Thiamine import ATP-binding protein ThiQ, found in Mesorhizobium japonicum (strain LMG 29417 / CECT 9101 / MAFF 303099) (Mesorhizobium loti (strain MAFF 303099)).